A 162-amino-acid polypeptide reads, in one-letter code: Nascent polypeptide-associated complex subunit beta (162 aa).

Disordered stretches follow at residues 1–39 (MPVD…NISE) and 130–162 (EQAK…DNVE). Residues 24–33 (TPRRPGKKVA) are compositionally biased toward basic residues. In terms of domain architecture, NAC-A/B spans 38-103 (SEDEKKLSAT…SQQKDIAELI (66 aa)). A compositionally biased stretch (acidic residues) spans 146-162 (GDDEIPNLVENFEDNVE).

Belongs to the NAC-beta family. Part of the nascent polypeptide-associated complex (NAC), consisting of EGD2 and EGD1. NAC associates with ribosomes via EGD1.

It is found in the cytoplasm. The protein localises to the nucleus. Functionally, component of the nascent polypeptide-associated complex (NAC), a dynamic component of the ribosomal exit tunnel, protecting the emerging polypeptides from interaction with other cytoplasmic proteins to ensure appropriate nascent protein targeting. The NAC complex also promotes mitochondrial protein import by enhancing productive ribosome interactions with the outer mitochondrial membrane and blocks the inappropriate interaction of ribosomes translating non-secretory nascent polypeptides with translocation sites in the membrane of the endoplasmic reticulum. EGD1 may act as a transcription factor that exert a negative effect on the expression of several genes that are transcribed by RNA polymerase II. The chain is Nascent polypeptide-associated complex subunit beta (EGD1) from Yarrowia lipolytica (strain CLIB 122 / E 150) (Yeast).